The chain runs to 246 residues: 1-(5-phosphoribosyl)-5-[(5-phosphoribosylamino)methylideneamino] imidazole-4-carboxamide isomerase (246 aa).

Residue D7 is the Proton acceptor of the active site. D129 acts as the Proton donor in catalysis.

It belongs to the HisA/HisF family.

The protein resides in the cytoplasm. It carries out the reaction 1-(5-phospho-beta-D-ribosyl)-5-[(5-phospho-beta-D-ribosylamino)methylideneamino]imidazole-4-carboxamide = 5-[(5-phospho-1-deoxy-D-ribulos-1-ylimino)methylamino]-1-(5-phospho-beta-D-ribosyl)imidazole-4-carboxamide. It participates in amino-acid biosynthesis; L-histidine biosynthesis; L-histidine from 5-phospho-alpha-D-ribose 1-diphosphate: step 4/9. This Buchnera aphidicola subsp. Acyrthosiphon pisum (strain 5A) protein is 1-(5-phosphoribosyl)-5-[(5-phosphoribosylamino)methylideneamino] imidazole-4-carboxamide isomerase.